Consider the following 212-residue polypeptide: MTTKKKAIMGIKIGMTQIFDENDKAVPVSIIEAGPCTVLQKKKVESDGYESIQVGFYNLKEKLANKPARGHFKKANVKPLRYIKEFRIDNVDDYDVGQEITADIFTTGDLVDVIGTSKGKGFAGGVKRHNFARGSMGHGSKYHRRPGSLGAKGPARVFKGRKLPGRLGGERVTVQGLKVVKVYPDRNLILIKGSIPGPKRGFVIIKNSVKEK.

Positions 133–152 are disordered; sequence RGSMGHGSKYHRRPGSLGAK.

Belongs to the universal ribosomal protein uL3 family. In terms of assembly, part of the 50S ribosomal subunit. Forms a cluster with proteins L14 and L19.

Its function is as follows. One of the primary rRNA binding proteins, it binds directly near the 3'-end of the 23S rRNA, where it nucleates assembly of the 50S subunit. The chain is Large ribosomal subunit protein uL3 from Syntrophomonas wolfei subsp. wolfei (strain DSM 2245B / Goettingen).